Here is a 762-residue protein sequence, read N- to C-terminus: Palmitoyltransferase ZDHHC8 (762 aa).

The Cytoplasmic portion of the chain corresponds to 1–13 (MPRSPGTRLKPAK). Residues 14–34 (YIPVATAAALLVGSSTLFFVF) traverse the membrane as a helical segment. At 35–52 (TCPWLTRAVSPAIPVYNG) the chain is on the lumenal side. Residues 53–73 (ILFLFVLANFSMATFMDPGVF) traverse the membrane as a helical segment. The Cytoplasmic portion of the chain corresponds to 74–148 (PRADEDEDKE…NCIGRRNYRY (75 aa)). One can recognise a DHHC domain in the interval 104–154 (KWCATCHFYRPPRCSHCSVCDNCVEDFDHHCPWVNNCIGRRNYRYFFLFLL). Residue C134 is the S-palmitoyl cysteine intermediate of the active site. Residues 149 to 169 (FFLFLLSLSAHMVGVVAFGLL) traverse the membrane as a helical segment. Topologically, residues 170–190 (YVLNHSEGLGAAHTTITMAVM) are lumenal. A helical membrane pass occupies residues 191 to 211 (CVAGLFFIPVIGLTGFHVVLV). The Cytoplasmic segment spans residues 212 to 762 (TRGRTTNEQV…VGGTTYEISV (551 aa)). Disordered regions lie at residues 289–350 (GLKA…PPTP), 362–423 (GPKT…TTDA), 436–537 (ASRR…SPVR), and 551–574 (ERKD…GDSG). A Phosphoserine modification is found at S335. The span at 408 to 417 (LRPPYPPSPP) shows a compositional bias: pro residues. The residue at position 439 (R439) is an Omega-N-methylarginine. Positions 471 to 485 (RNGSLSYDSLLNPGS) are enriched in polar residues. The segment covering 511 to 521 (PSDPPRPPPRS) has biased composition (pro residues). Residues 551–562 (ERKDREERERLL) are compositionally biased toward basic and acidic residues. A phosphoserine mark is found at S603 and S624. A compositionally biased stretch (low complexity) spans 626 to 644 (SSLSSSMSRAPRTSSSSLQ). Disordered regions lie at residues 626 to 684 (SSLS…SYTG) and 707 to 744 (DHPQ…PARH). A phosphoserine mark is found at S672, S679, S722, and S740.

It belongs to the DHHC palmitoyltransferase family. ERF2/ZDHHC9 subfamily. In terms of tissue distribution, expressed in brain cortex and hippocampus.

It localises to the golgi apparatus membrane. Its subcellular location is the mitochondrion membrane. The enzyme catalyses L-cysteinyl-[protein] + hexadecanoyl-CoA = S-hexadecanoyl-L-cysteinyl-[protein] + CoA. Functionally, palmitoyltransferase that catalyzes the addition of palmitate onto various protein substrates and therefore functions in several unrelated biological processes. Through the palmitoylation of ABCA1 regulates the localization of the transporter to the plasma membrane and thereby regulates its function in cholesterol and phospholipid efflux. Could also pamitoylate the D(2) dopamine receptor DRD2 and regulate its stability and localization to the plasma membrane. Could also play a role in glutamatergic transmission. In Mus musculus (Mouse), this protein is Palmitoyltransferase ZDHHC8.